Consider the following 125-residue polypeptide: Cu-Zn superoxide dismutase-like protein OPG175 (125 aa).

Cysteines 52 and 102 form a disulfide.

Belongs to the Cu-Zn superoxide dismutase family.

The protein localises to the virion. It localises to the host cytoplasm. In terms of biological role, superoxide dismutase-like protein with no enzymatic activity. The sequence is that of Cu-Zn superoxide dismutase-like protein OPG175 (OPG175) from Vaccinia virus (strain Western Reserve) (VACV).